A 757-amino-acid chain; its full sequence is Two pore calcium channel protein 1 (757 aa).

Over Met-1–Arg-94 the chain is Cytoplasmic. Positions His-24–Arg-48 are disordered. The segment covering Gly-29–Arg-45 has biased composition (gly residues). The helical transmembrane segment at Phe-95–Leu-115 threads the bilayer. Over Leu-116 to Ser-152 the chain is Extracellular. A helical membrane pass occupies residues Leu-153–Tyr-173. Topologically, residues Glu-174–Lys-188 are cytoplasmic. The chain crosses the membrane as a helical span at residues Val-189 to Phe-209. Arg-210 is a topological domain (extracellular). Residues Val-211–Arg-228 form a helical; Voltage-sensor membrane-spanning segment. At Met-229–Thr-233 the chain is on the cytoplasmic side. The chain crosses the membrane as a helical span at residues Leu-234–Phe-254. At Ala-255–Lys-270 the chain is on the extracellular side. Positions Thr-271–Ile-285 form an intramembrane region, pore-forming. The Extracellular segment spans residues Leu-286–Leu-308. Residues Phe-309 to Ile-329 traverse the membrane as a helical segment. The Cytoplasmic segment spans residues Tyr-330–Arg-453. EF-hand domains are found at residues Thr-347–Tyr-382 and Thr-388–Lys-423. A helical transmembrane segment spans residues Ser-454–Ile-474. Over Glu-475–Glu-493 the chain is Extracellular. N-linked (GlcNAc...) asparagine glycosylation occurs at Asn-482. A helical transmembrane segment spans residues Phe-494–Gly-514. Residues Ala-515 to Lys-523 lie on the Cytoplasmic side of the membrane. Residues Phe-524 to Ser-544 traverse the membrane as a helical segment. The Extracellular portion of the chain corresponds to Lys-545–Glu-553. Residues Trp-554 to Leu-571 form a helical; Voltage-sensor membrane-spanning segment. The Cytoplasmic portion of the chain corresponds to Gln-572–Gly-595. A helical membrane pass occupies residues Ile-596 to Val-616. Topologically, residues Tyr-617–Asp-640 are extracellular. The pore-forming intramembrane region spans Tyr-641–Gly-655. Topologically, residues Asn-656–Tyr-676 are extracellular. The chain crosses the membrane as a helical span at residues Phe-677–Leu-697. The Cytoplasmic portion of the chain corresponds to Glu-698 to Gln-757.

Belongs to the calcium channel alpha-1 subunit (TC 1.A.1.11) family. Two pore calcium channel subfamily. As to quaternary structure, homodimer. Expressed in shoot, mature leaf, cultured cells, and at lower level in roots.

The protein resides in the membrane. Inhibited by the VDCC blocker verapamil in yeast cells. Channel activity may be down-regulated by cytosolic Ca(2+) in rice cells. Inhibited by Al(3+). In terms of biological role, may function as one of the major voltage-gated Ca(2+) channel (VDCC) across the plasma membrane. May be involved in the regulation of cytosolic Ca(2+) and in growth and development. Acts as the major ROS-responsive Ca(2+) channel and is the possible target of Al-dependent inhibition. Determines sensitivity to T.viride xylanase elicitor. Plays a regulatory role in elicitor-induced defense responses and hypersensitive cell death. The polypeptide is Two pore calcium channel protein 1 (TPC1) (Oryza sativa subsp. japonica (Rice)).